Reading from the N-terminus, the 160-residue chain is Transcriptional repressor NrdR (160 aa).

The segment at 3 to 34 (CPFCGHADTQVVDSRVSEEGDTIRRRRRCLSC) is a zinc-finger region. Positions 49–139 (PTVVKRDGSR…VYKSFEDIGE (91 aa)) constitute an ATP-cone domain.

This sequence belongs to the NrdR family. The cofactor is Zn(2+).

Negatively regulates transcription of bacterial ribonucleotide reductase nrd genes and operons by binding to NrdR-boxes. The protein is Transcriptional repressor NrdR of Bordetella avium (strain 197N).